A 38-amino-acid chain; its full sequence is Photosystem II reaction center protein L (38 aa).

Residues S17–F37 traverse the membrane as a helical segment.

It belongs to the PsbL family. As to quaternary structure, PSII is composed of 1 copy each of membrane proteins PsbA, PsbB, PsbC, PsbD, PsbE, PsbF, PsbH, PsbI, PsbJ, PsbK, PsbL, PsbM, PsbT, PsbX, PsbY, PsbZ, Psb30/Ycf12, at least 3 peripheral proteins of the oxygen-evolving complex and a large number of cofactors. It forms dimeric complexes.

The protein localises to the plastid. The protein resides in the chloroplast thylakoid membrane. Functionally, one of the components of the core complex of photosystem II (PSII). PSII is a light-driven water:plastoquinone oxidoreductase that uses light energy to abstract electrons from H(2)O, generating O(2) and a proton gradient subsequently used for ATP formation. It consists of a core antenna complex that captures photons, and an electron transfer chain that converts photonic excitation into a charge separation. This subunit is found at the monomer-monomer interface and is required for correct PSII assembly and/or dimerization. The protein is Photosystem II reaction center protein L of Nephroselmis olivacea (Green alga).